Reading from the N-terminus, the 293-residue chain is Shikimate dehydrogenase (NADP(+)) (293 aa).

Residues 26 to 28 and Thr73 contribute to the shikimate site; that span reads SKS. The active-site Proton acceptor is the Lys77. Glu89 lines the NADP(+) pocket. Shikimate is bound by residues Asn98 and Asp113. NADP(+) contacts are provided by residues 137 to 141, 161 to 166, and Ile231; these read GAGGA and NRTRQR. Position 233 (Tyr233) interacts with shikimate. Gly254 is a binding site for NADP(+).

Belongs to the shikimate dehydrogenase family. Homodimer.

The catalysed reaction is shikimate + NADP(+) = 3-dehydroshikimate + NADPH + H(+). It participates in metabolic intermediate biosynthesis; chorismate biosynthesis; chorismate from D-erythrose 4-phosphate and phosphoenolpyruvate: step 4/7. In terms of biological role, involved in the biosynthesis of the chorismate, which leads to the biosynthesis of aromatic amino acids. Catalyzes the reversible NADPH linked reduction of 3-dehydroshikimate (DHSA) to yield shikimate (SA). This Bartonella quintana (strain Toulouse) (Rochalimaea quintana) protein is Shikimate dehydrogenase (NADP(+)).